Reading from the N-terminus, the 493-residue chain is Glutamyl-tRNA(Gln) amidotransferase subunit A (493 aa).

Active-site charge relay system residues include lysine 79 and serine 159. Catalysis depends on serine 183, which acts as the Acyl-ester intermediate.

Belongs to the amidase family. GatA subfamily. As to quaternary structure, heterotrimer of A, B and C subunits.

The catalysed reaction is L-glutamyl-tRNA(Gln) + L-glutamine + ATP + H2O = L-glutaminyl-tRNA(Gln) + L-glutamate + ADP + phosphate + H(+). Allows the formation of correctly charged Gln-tRNA(Gln) through the transamidation of misacylated Glu-tRNA(Gln) in organisms which lack glutaminyl-tRNA synthetase. The reaction takes place in the presence of glutamine and ATP through an activated gamma-phospho-Glu-tRNA(Gln). The chain is Glutamyl-tRNA(Gln) amidotransferase subunit A from Rhizobium meliloti (strain 1021) (Ensifer meliloti).